A 978-amino-acid chain; its full sequence is Alanine--tRNA ligase, chloroplastic/mitochondrial (978 aa).

H655, H659, C758, and H762 together coordinate Zn(2+). Residue K773 forms a Glycyl lysine isopeptide (Lys-Gly) (interchain with G-Cter in ubiquitin) linkage.

The protein belongs to the class-II aminoacyl-tRNA synthetase family. In terms of assembly, monomer. Zn(2+) is required as a cofactor.

The protein localises to the plastid. Its subcellular location is the chloroplast. It localises to the mitochondrion. The enzyme catalyses tRNA(Ala) + L-alanine + ATP = L-alanyl-tRNA(Ala) + AMP + diphosphate. Catalyzes the attachment of alanine to tRNA(Ala) in a two-step reaction: alanine is first activated by ATP to form Ala-AMP and then transferred to the acceptor end of tRNA(Ala). Also edits incorrectly charged tRNA(Ala) via its editing domain. This Arabidopsis thaliana (Mouse-ear cress) protein is Alanine--tRNA ligase, chloroplastic/mitochondrial (EMB86).